Reading from the N-terminus, the 177-residue chain is CCHC-type zinc finger nucleic acid binding protein (177 aa).

Position 2 is an N-acetylserine (serine 2). The CCHC-type 1 zinc finger occupies 4–21; the sequence is NECFKCGRSGHWARECPT. Lysine 8 is subject to N6-acetyllysine. An omega-N-methylarginine; by PRMT1 mark is found at arginine 25 and arginine 27. The interval 25 to 38 is RNA-binding Arg/Gly-rich region (RGG-box); sequence RGRGMRSRGRGGFT. Residues arginine 32 and arginine 34 each carry the omega-N-methylarginine modification. Serine 49 carries the post-translational modification Phosphoserine. CCHC-type zinc fingers lie at residues 52 to 69, 72 to 89, 96 to 113, 117 to 134, 135 to 152, and 156 to 173; these read DICYRCGESGHLAKDCDL, DACYNCGRGGHIAKDCKE, QCCYNCGKPGHLARDCDH, QKCYSCGEFGHIQKDCTK, VKCYRCGETGHVAINCSK, and VNCYRCGESGHLARECTI. 3 positions are modified to omega-N-methylarginine: alanine 73, arginine 79, and glycine 80.

Associates with the 40S ribosomal subunit, the 80S ribosome and with polysomes. Post-translationally, arginine methylation by PRMT1 in the Arg/Gly-rich region impedes RNA binding. Expressed in the liver, kidney, spleen, testis, lung, muscle and adrenal glands.

The protein localises to the nucleus. It is found in the cytoplasm. Its subcellular location is the endoplasmic reticulum. In terms of biological role, single-stranded DNA-binding protein that preferentially binds to the sterol regulatory element (SRE) sequence 5'-GTGCGGTG-3', and thereby mediates transcriptional repression. Has a role as transactivator of the Myc promoter. Binds single-stranded RNA in a sequence-specific manner. Functionally, binds G-rich elements in target mRNA coding sequences. Prevents G-quadruplex structure formation in vitro, suggesting a role in supporting translation by resolving stable structures on mRNAs. Its function is as follows. Binds to RNA. The chain is CCHC-type zinc finger nucleic acid binding protein from Homo sapiens (Human).